A 247-amino-acid polypeptide reads, in one-letter code: Protein LIFEGUARD 4 (247 aa).

A run of 7 helical transmembrane segments spans residues 42–62 (VYSI…TVVF), 75–95 (AGLA…CPLY), 105–125 (YLLL…TCAF), 130–150 (VILE…VYTF), 165–185 (FLFG…FFPL), 188–208 (ISVM…IVYD), and 222–242 (IWAA…LLTI).

Belongs to the BI1 family.

It is found in the membrane. This is Protein LIFEGUARD 4 from Arabidopsis thaliana (Mouse-ear cress).